Consider the following 313-residue polypeptide: Endo-beta-N-acetylglucosaminidase H (313 aa).

Positions 1 to 42 (MFTPVRRRVRTAALALSAAAALVLGSTAASGASATPSPAPAP) form a signal peptide, or 44. The GH18 domain maps to 51–307 (PTSVAYVEVN…SAFTRELYGS (257 aa)). The active-site Proton donor is Glu174.

It belongs to the glycosyl hydrolase 18 family.

It carries out the reaction an N(4)-(oligosaccharide-(1-&gt;3)-[oligosaccharide-(1-&gt;6)]-beta-D-Man-(1-&gt;4)-beta-D-GlcNAc-(1-&gt;4)-alpha-D-GlcNAc)-L-asparaginyl-[protein] + H2O = an oligosaccharide-(1-&gt;3)-[oligosaccharide-(1-&gt;6)]-beta-D-Man-(1-&gt;4)-D-GlcNAc + N(4)-(N-acetyl-beta-D-glucosaminyl)-L-asparaginyl-[protein]. Functionally, cleaves asparagine-linked oligomannose and hybrid, but not complex, oligosaccharides from glycoproteins. The polypeptide is Endo-beta-N-acetylglucosaminidase H (Streptomyces plicatus).